Here is a 253-residue protein sequence, read N- to C-terminus: Geranylgeranylglyceryl phosphate synthase (253 aa).

2 residues coordinate Mg(2+): Asp28 and Ser53. Sn-glycerol 1-phosphate contacts are provided by residues 172–178 (YLEAGSG), 203–204 (GG), and 225–226 (GN).

The protein belongs to the GGGP/HepGP synthase family. Group II subfamily. Requires Mg(2+) as cofactor.

It is found in the cytoplasm. The enzyme catalyses sn-glycerol 1-phosphate + (2E,6E,10E)-geranylgeranyl diphosphate = sn-3-O-(geranylgeranyl)glycerol 1-phosphate + diphosphate. It functions in the pathway membrane lipid metabolism; glycerophospholipid metabolism. Its function is as follows. Prenyltransferase that catalyzes the transfer of the geranylgeranyl moiety of geranylgeranyl diphosphate (GGPP) to the C3 hydroxyl of sn-glycerol-1-phosphate (G1P). This reaction is the first ether-bond-formation step in the biosynthesis of archaeal membrane lipids. This Methanocaldococcus jannaschii (strain ATCC 43067 / DSM 2661 / JAL-1 / JCM 10045 / NBRC 100440) (Methanococcus jannaschii) protein is Geranylgeranylglyceryl phosphate synthase.